The sequence spans 1346 residues: G-protein coupled receptor-associated sorting protein 1 (1346 aa).

3 disordered regions span residues 1–101 (MTGA…FRGE), 144–177 (TESI…RPRP), and 192–258 (ADKS…SAKT). Residues 21–36 (ENANAAEVEPEVPLVV) show a composition bias toward low complexity. Basic residues predominate over residues 211–226 (FRPRKSMKSNTRFRHM). Residue Ser295 is modified to Phosphoserine. Disordered stretches follow at residues 311 to 399 (EEAK…RPEE) and 461 to 485 (VSSF…SKSM). Residues 316-333 (RSKPRARKGVNMRARHQA) show a composition bias toward basic residues. Basic and acidic residues-rich tracts occupy residues 347–361 (DKNK…EEKA) and 370–399 (KKEP…RPEE). The span at 461 to 484 (VSSFCLGSGKKTSMESGPKATSKS) shows a compositional bias: polar residues. Ser619 and Ser626 each carry phosphoserine. Phosphothreonine is present on Thr860. Ser862 carries the post-translational modification Phosphoserine. The segment at 984-1004 (ACEPESSTEHEPDPSRRPQSW) is disordered. A compositionally biased stretch (basic and acidic residues) spans 990-1003 (STEHEPDPSRRPQS).

Belongs to the GPRASP family. As to quaternary structure, interacts with cytoplasmic tails of a variety of G-protein coupled receptors such as delta opioid receptor/OPRD1, beta-2 adrenergic receptor/ADRB2 and D4 dopamine receptor/DRD4. Interacts with BECN2; the interaction is direct and with D2 dopamine receptor/DRD2. Interacts with PER1. In terms of tissue distribution, expressed in the brain.

The protein localises to the cytoplasm. Functionally, modulates lysosomal sorting and functional down-regulation of a variety of G-protein coupled receptors. Targets receptors for degradation in lysosomes via its interaction with BECN2. The polypeptide is G-protein coupled receptor-associated sorting protein 1 (Gprasp1) (Rattus norvegicus (Rat)).